We begin with the raw amino-acid sequence, 33 residues long: Photosystem II reaction center protein Psb30 (33 aa).

The helical transmembrane segment at 5–25 (LIVQLGSLALITVAGPAIIVL) threads the bilayer.

The protein belongs to the Psb30/Ycf12 family. In terms of assembly, PSII is composed of 1 copy each of membrane proteins PsbA, PsbB, PsbC, PsbD, PsbE, PsbF, PsbH, PsbI, PsbJ, PsbK, PsbL, PsbM, PsbT, PsbY, PsbZ, Psb30/Ycf12, peripheral proteins of the oxygen-evolving complex and a large number of cofactors. It forms dimeric complexes.

The protein localises to the plastid. It localises to the chloroplast thylakoid membrane. In terms of biological role, a core subunit of photosystem II (PSII), probably helps stabilize the reaction center. This chain is Photosystem II reaction center protein Psb30, found in Euglena stellata.